The primary structure comprises 147 residues: Large ribosomal subunit protein uL15 (147 aa).

The disordered stretch occupies residues 1-65; the sequence is MQLHELKPAP…PLQRRLPKRG (65 aa). Composition is skewed to gly residues over residues 21 to 31 and 42 to 52; these read QGIGSGLGKTA and SGGGVRPGFEG.

Belongs to the universal ribosomal protein uL15 family. As to quaternary structure, part of the 50S ribosomal subunit.

Its function is as follows. Binds to the 23S rRNA. This Heliobacterium modesticaldum (strain ATCC 51547 / Ice1) protein is Large ribosomal subunit protein uL15.